Reading from the N-terminus, the 183-residue chain is A-type ATP synthase subunit E (183 aa).

The protein belongs to the V-ATPase E subunit family. As to quaternary structure, has multiple subunits, A(3), B(3), C, D, E, F, G, I and K(x); there may be a few other subunits as well.

Its subcellular location is the cell membrane. Component of the A-type ATP synthase that produces ATP from ADP in the presence of a proton gradient across the membrane. The chain is A-type ATP synthase subunit E from Methanosarcina mazei (strain ATCC BAA-159 / DSM 3647 / Goe1 / Go1 / JCM 11833 / OCM 88) (Methanosarcina frisia).